Here is a 371-residue protein sequence, read N- to C-terminus: Chemerin-like receptor 1 (371 aa).

At 1 to 39 (MEYDAYNDSGIYDDEYSDGFGYFVDLEEASPWEAKVAPV) the chain is on the extracellular side. Asn-7 carries N-linked (GlcNAc...) asparagine glycosylation. A helical transmembrane segment spans residues 40-62 (FLVVIYSLVCFLGLLGNGLVIVI). The Cytoplasmic portion of the chain corresponds to 63–73 (ATFKMKKTVNT). Residues 74–95 (VWFVNLAVADFLFNIFLPMHIT) form a helical membrane-spanning segment. Residues 96-112 (YAAMDYHWVFGKAMCKI) are Extracellular-facing. A disulfide bridge links Cys-110 with Cys-187. The helical transmembrane segment at 113 to 133 (SNFLLSHNMYTSVFLLTVISF) threads the bilayer. At 134–152 (DRCISVLLPVWSQNHRSIR) the chain is on the cytoplasmic side. The helical transmembrane segment at 153 to 174 (LAYMTCSAVWVLAFFLSSPSLV) threads the bilayer. Residues 175–222 (FRDTANIHGKITCFNNFSLAAPESSPHPAHSQVVSTGYSRHVAVTVTR) are Extracellular-facing. A glycan (N-linked (GlcNAc...) asparagine) is linked at Asn-190. The helical transmembrane segment at 223-243 (FLCGFLIPVFIITACYLTIVF) threads the bilayer. The Cytoplasmic segment spans residues 244-259 (KLQRNRLAKNKKPFKI). The chain crosses the membrane as a helical span at residues 260-280 (IITIIITFFLCWCPYHTLYLL). The Extracellular segment spans residues 281 to 298 (ELHHTAVPSSVFSLGLPL). Residues 299–318 (ATAVAIANSCMNPILYVFMG) traverse the membrane as a helical segment. At 319-371 (HDFRKFKVALFSRLANALSEDTGPSSYPSHRSFTKMSSLNEKASVNEKETSTL) the chain is on the cytoplasmic side. Ser-337 is modified (phosphoserine). Thr-340 bears the Phosphothreonine mark. Phosphoserine occurs at positions 347, 350, and 356. Phosphothreonine is present on Thr-370.

It belongs to the chemokine-like receptor (CMKLR) family. As to expression, expressed in the differentiated adipocytes (at protein level). Ubiquitous. Highly expressed in adipose tissue and immature plasmacytoid dendritic cells (DCs) and at lower levels in myeloid DCs, macrophages, and NK cells. Expressed on macrophages isolated from different tissues, including peritoneal cavities, pleural cavities and spleen.

The protein localises to the cell membrane. In terms of biological role, receptor for the chemoattractant adipokine chemerin/RARRES2 and for the omega-3 fatty acid derived molecule resolvin E1. Interaction with RARRES2 initiates activation of G proteins G(i)/G(o) and beta-arrestin pathways inducing cellular responses via second messenger pathways such as intracellular calcium mobilization, phosphorylation of MAP kinases MAPK1/MAPK3 (ERK1/2), TYRO3, MAPK14/P38MAPK and PI3K leading to multifunctional effects, like, reduction of immune responses, enhancing of adipogenesis and angionesis. Resolvin E1 down-regulates cytokine production in macrophages by reducing the activation of MAPK1/3 (ERK1/2) and NF-kappa-B. Positively regulates adipogenesis and adipocyte metabolism. This chain is Chemerin-like receptor 1 (Cmklr1), found in Mus musculus (Mouse).